Consider the following 61-residue polypeptide: Temporin-ALj (61 aa).

Residues 1–22 form the signal peptide; that stretch reads MFTLKKSLLLLFFLATINLSFC. Residues 23–46 constitute a propeptide that is removed on maturation; sequence EQERNAEEERRDEPDERNAEVEKR. Position 59 is a leucine amide (leucine 59).

Belongs to the frog skin active peptide (FSAP) family. Temporin subfamily. Expressed by the skin glands.

Its subcellular location is the secreted. Its function is as follows. Antimicrobial peptide with activity against Gram-positive and Gram-negative bacteria and against fungi. Has been tested against S.aureus (MIC=7.5 ug/mL), B.pumilus (MIC=15.0 ug/mL), B.cereus (MIC=75.0 ug/mL), E.coli (MIC=15.0 ug/mL), B.dysenteriae (MIC=30.0 ug/mL), A.cacoaceticus (MIC=60.0 ug/mL), P.aeruginosa (MIC=7.5 ug/mL) and C.albicans (MIC=5.0 ug/mL). Also shows a weak hemolytic activity. The protein is Temporin-ALj of Amolops loloensis (Lolokou Sucker Frog).